A 263-amino-acid chain; its full sequence is Receptor expression-enhancing protein 3-A (263 aa).

The next 2 membrane-spanning stretches (helical) occupy residues 2–22 (VSWI…PAYF) and 35–55 (YVRW…EAIA). Disordered stretches follow at residues 161–228 (GDET…SMRS) and 240–263 (YASL…AHHL). Over residues 199 to 214 (DDNTDEDVEVNSEDEV) the composition is skewed to acidic residues. A compositionally biased stretch (basic residues) spans 242–251 (SLKHKPKKRP).

It belongs to the DP1 family.

The protein localises to the endoplasmic reticulum membrane. In terms of biological role, microtubule-binding protein required to ensure proper cell division and nuclear envelope reassembly by sequestering the endoplasmic reticulum away from chromosomes during mitosis. Probably acts by clearing the endoplasmic reticulum membrane from metaphase chromosomes. The polypeptide is Receptor expression-enhancing protein 3-A (reep3-a) (Xenopus laevis (African clawed frog)).